The sequence spans 212 residues: Outer-membrane lipoprotein LolB (212 aa).

An N-terminal signal peptide occupies residues 1-16; the sequence is MACRSWVLGILLVLVG. Residue Cys17 is the site of N-palmitoyl cysteine attachment. Cys17 is lipidated: S-diacylglycerol cysteine.

This sequence belongs to the LolB family. Monomer.

It localises to the cell outer membrane. Its function is as follows. Plays a critical role in the incorporation of lipoproteins in the outer membrane after they are released by the LolA protein. The sequence is that of Outer-membrane lipoprotein LolB from Nitrosomonas europaea (strain ATCC 19718 / CIP 103999 / KCTC 2705 / NBRC 14298).